Reading from the N-terminus, the 490-residue chain is MTENNEHLALWGGRFTSGPSPELARLSKSTQFDWRLADDDIAGSRAHARALGRAGLLTADELQRMEDALDTLQRHVDDGSFAPIEDDEDEATALERGLIDIAGDELGGKLRAGRSRNDQIACLIRMWLRRHSRVIAGLLLDLVNALIEQSEKAGRTVMPGRTHMQHAQPVLLAHQLMAHAWPLIRDVQRLIDWDKRINASPYGSGALAGNTLGLDPEAVARELGFSRVTDNSIDGTAARDLVAEFAFVAAMTGVDISRLSEEIIIWNTQEFAFVKLDDGYSTGSSIMPQKKNPDIAELARGKSGRLIGDLTGLLATLKGLPTAYARDLQEDKEAVFDQVDTLEVLLPAFTGMVRTMHFDGDRLEEEAPTGFALATDIAEWLVKNGVPFRHAHELSGACVKLAEGRGQELWDLTDNDFIETFAAFLPADKAPGVREVLSSHGSVDSRNGKGGTAYGRVREQIADAKAEVEELKLFPASTSDGSAYKAPGTF.

Belongs to the lyase 1 family. Argininosuccinate lyase subfamily.

It is found in the cytoplasm. It carries out the reaction 2-(N(omega)-L-arginino)succinate = fumarate + L-arginine. Its pathway is amino-acid biosynthesis; L-arginine biosynthesis; L-arginine from L-ornithine and carbamoyl phosphate: step 3/3. The protein is Argininosuccinate lyase of Bifidobacterium longum (strain DJO10A).